The chain runs to 485 residues: Caspid protein (485 aa).

Asn5 and Asn178 each carry an N-linked (GlcNAc...) asparagine; by host glycan. The tract at residues 236 to 262 (IALTLFNLADTLLGGLPTELISSAGGQ) is particle formation. Residue Asn430 is glycosylated (N-linked (GlcNAc...) asparagine; by host). An oligomerization region spans residues 453 to 478 (TTSLGAGPVSISAVAVLAPHSALALL).

It belongs to the hepevirus capsid protein family. In terms of assembly, self-assembles to form the capsid. The capsid is dominated by dimers that define the 30 morphological units. Interacts with phosphorylated protein ORF3. Interacts with host TMEM134. Interacts with host ASGR1 and ASGR2; these interactions facilitate infection of host hepatocytes. Not N-glycosylated.

It localises to the virion. The protein resides in the host cytoplasm. Its subcellular location is the host endoplasmic reticulum. It is found in the host Golgi apparatus. The protein localises to the host cell surface. It localises to the host nucleus. Its function is as follows. Forms an icosahedral capsid with a T=1 symmetry and a 34 nm diameter. The capsid is composed of 60 copies linked to each other. Binds to the 5' end of the genomic RNA to mediate genome encapsidation. Binds to heparin surface proteoglycans (HSPGs) to mediate viral entry. Additionally, the interactions with host ASGR1 and ASGR2 facilitate viral infection of hepatocytes. Inhibits IFN production by blocking host TBK1-induced IRF3 phosphorylation. The nuclear form probably modulates host gene expression. The sequence is that of Caspid protein from Hepatitis E virus (isolate Rhesus/HT-4) (HEV).